We begin with the raw amino-acid sequence, 695 residues long: Protein ACTIVITY OF BC1 COMPLEX KINASE 7, chloroplastic (695 aa).

The region spanning 259–589 is the Protein kinase domain; that stretch reads EFEEQPIAAA…VQEIRKQADD (331 aa). Residues 265 to 273 and K287 each bind ATP; that span reads IAAASLGQV. Residue D421 is the Proton acceptor of the active site. 2 helical membrane-spanning segments follow: residues 633–653 and 659–679; these read TILQ…NIGV and GSQL…LLVL.

It belongs to the protein kinase superfamily. ADCK protein kinase family. In terms of tissue distribution, mostly expressed in leaves and flowers, and, to a lower extent, in roots.

It localises to the plastid. Its subcellular location is the chloroplast thylakoid membrane. It is found in the chloroplast. The protein localises to the plastoglobule. The catalysed reaction is L-seryl-[protein] + ATP = O-phospho-L-seryl-[protein] + ADP + H(+). The enzyme catalyses L-threonyl-[protein] + ATP = O-phospho-L-threonyl-[protein] + ADP + H(+). Its function is as follows. Involved in resistance to oxidative stress. Influences responses to reactive oxygen species (ROS) production. Regulates plastoglobules formation in thylakoids. Together with OSA1, regulates iron distribution within the chloroplast and mediates the oxidative stress response. Together with ABC1K8, influences chloroplast lipid synthesis/accumulation and modulates chloroplast membrane composition in response to stress. The chain is Protein ACTIVITY OF BC1 COMPLEX KINASE 7, chloroplastic from Arabidopsis thaliana (Mouse-ear cress).